The chain runs to 1228 residues: Structural maintenance of chromosomes protein 1 (1228 aa).

32–39 (GPNGAGKS) is an ATP binding site. Positions 197-510 (NKKRGINAEL…ESKQDAKKRE (314 aa)) form a coiled coil. An SMC hinge domain is found at 522 to 635 (VKGRIIDLCT…CDSMTVARDL (114 aa)). Coiled-coil stretches lie at residues 710 to 783 (KLHS…KIFS), 814 to 926 (EFTK…EIDR), and 984 to 1068 (VEVD…KRLQ).

It belongs to the SMC family. SMC1 subfamily. In terms of assembly, cohesin complexes are composed of the psm1/smc1 and psm3/smc3 heterodimer attached via their SMC hinge domain, rad21/scc1 which link them, and psc3/scc3, which interacts with rad21.

It is found in the nucleus. The protein localises to the chromosome. Its function is as follows. Involved in chromosome cohesion during cell cycle and in DNA repair. Central component of cohesin complex. The cohesin complex is required for the cohesion of sister chromatids after DNA replication. The cohesin complex apparently forms a large proteinaceous ring within which sister chromatids can be trapped. At anaphase, the complex is cleaved and dissociates from chromatin, allowing sister chromatids to segregate. The protein is Structural maintenance of chromosomes protein 1 (psm1) of Schizosaccharomyces pombe (strain 972 / ATCC 24843) (Fission yeast).